The chain runs to 433 residues: MKQHLWPLFLEAIKRDVVPALGCTEPISVALAAAIAIGELGIKNQASNVKMDVSVSANLMKNGMGVGIPGTGMVGLPIAAAIGAVAGDSNAGLEVLKNLTDSDVQAAKLMLDNGQVTVGVADVANVLYAKVTVYYQQQTASVTIADSHTKVIAIEKNGEQCLPAPEVESVNDKSNKANPFTEARLQDIYDFAMHAPLDDIGFIMQSKSLNDALSIEGLSGHYGLKIGATLVKNQEKGLLSGGLLTEVLARTAGASDARMDGAMMPAMSNSGSGNQGIAATMPVVACAEFLKSSETQTIRALMLSHLTAIYIKSYQNKLSALCGATTAAMGSAAGITYLLDGEIEQVSAAICSMIGDVSGVICDGAKTACAMKVSSSAGAAVKSALMAIDGIRVTGTEGIVADDVDQTISNLATLANGAMTQTDVQILEIMMHK.

It belongs to the UPF0597 family.

This chain is UPF0597 protein Spea_0809, found in Shewanella pealeana (strain ATCC 700345 / ANG-SQ1).